Here is a 263-residue protein sequence, read N- to C-terminus: MSAQSALSGLGAKLLSGEVEVVDCTGVLGPNTPILQLPPDFAKNTPKVEIHKISEYDSDGPFFAWNWMVLGEHSGTHFDAPHHWITGKDYSDGFTDTLDVQRLIAPVNVIDCSKESAADPDFLLTADLIKAWEAEHGEIGAGEWVVMRTDWDKRAGDEAAFLNADETGPHSPGPTPDAIEYLLSKKIVGWGSQCIGTDAGQAGGMEPPFPAHNLLHRDNCFGLASLANLDKLPAKGAILIAAPLKIERGTGSPIRALALVPKA.

62-66 (FFAWN) serves as a coordination point for substrate. Mn(2+)-binding residues include histidine 73, histidine 77, and aspartate 79. Residue histidine 83 is the Proton donor/acceptor of the active site. Histidine 212 is a substrate binding site.

This sequence belongs to the Cyclase 1 superfamily. Homodimer. The cofactor is Mn(2+).

It catalyses the reaction isatin + H2O = isatinate + H(+). Its activity is regulated as follows. Inhibited by thioisatinate. Functionally, involved in the degradation of the plant hormone indole-3-acetic acid (IAA). Catalyzes the hydrolysis of the cyclic amide bond (lactam) of isatin (1H-indole-2,3-dione) to yield isatinate (2-(2-aminophenyl)-2-oxoacetate). The chain is Isatin hydrolase from Roseibium aggregatum (strain ATCC 25650 / DSM 13394 / JCM 20685 / NBRC 16684 / NCIMB 2208 / IAM 12614 / B1) (Stappia aggregata).